A 494-amino-acid chain; its full sequence is Cysteine--tRNA ligase (494 aa).

Residue Cys29 coordinates Zn(2+). Positions 31 to 41 (VTVYDYCHLGH) match the 'HIGH' region motif. 3 residues coordinate Zn(2+): Cys216, His241, and Glu245. The 'KMSKS' region motif lies at 273–277 (KMSKS). Lys276 serves as a coordination point for ATP.

The protein belongs to the class-I aminoacyl-tRNA synthetase family. As to quaternary structure, monomer. Requires Zn(2+) as cofactor.

The protein localises to the cytoplasm. It catalyses the reaction tRNA(Cys) + L-cysteine + ATP = L-cysteinyl-tRNA(Cys) + AMP + diphosphate. This is Cysteine--tRNA ligase from Cyanothece sp. (strain PCC 7425 / ATCC 29141).